The primary structure comprises 156 residues: Small ribosomal subunit protein uS7 (156 aa).

The protein belongs to the universal ribosomal protein uS7 family. In terms of assembly, part of the 30S ribosomal subunit. Contacts proteins S9 and S11.

In terms of biological role, one of the primary rRNA binding proteins, it binds directly to 16S rRNA where it nucleates assembly of the head domain of the 30S subunit. Is located at the subunit interface close to the decoding center, probably blocks exit of the E-site tRNA. The protein is Small ribosomal subunit protein uS7 of Limosilactobacillus fermentum (strain NBRC 3956 / LMG 18251) (Lactobacillus fermentum).